We begin with the raw amino-acid sequence, 130 residues long: UPF0251 protein MmarC7_1642 (130 aa).

This sequence belongs to the UPF0251 family.

In Methanococcus maripaludis (strain C7 / ATCC BAA-1331), this protein is UPF0251 protein MmarC7_1642.